The following is a 257-amino-acid chain: Triosephosphate isomerase (257 aa).

9-11 (NWK) serves as a coordination point for substrate. The Electrophile role is filled by H95. The active-site Proton acceptor is E168. Substrate-binding positions include G174, S213, and 234–235 (GG).

It belongs to the triosephosphate isomerase family. As to quaternary structure, homodimer.

It localises to the cytoplasm. The enzyme catalyses D-glyceraldehyde 3-phosphate = dihydroxyacetone phosphate. The protein operates within carbohydrate biosynthesis; gluconeogenesis. It functions in the pathway carbohydrate degradation; glycolysis; D-glyceraldehyde 3-phosphate from glycerone phosphate: step 1/1. Its function is as follows. Involved in the gluconeogenesis. Catalyzes stereospecifically the conversion of dihydroxyacetone phosphate (DHAP) to D-glyceraldehyde-3-phosphate (G3P). This Acidithiobacillus ferrooxidans (strain ATCC 23270 / DSM 14882 / CIP 104768 / NCIMB 8455) (Ferrobacillus ferrooxidans (strain ATCC 23270)) protein is Triosephosphate isomerase.